Consider the following 320-residue polypeptide: Ferrochelatase (320 aa).

Fe cation is bound by residues H194 and E275.

This sequence belongs to the ferrochelatase family.

Its subcellular location is the cytoplasm. The enzyme catalyses heme b + 2 H(+) = protoporphyrin IX + Fe(2+). It functions in the pathway porphyrin-containing compound metabolism; protoheme biosynthesis; protoheme from protoporphyrin-IX: step 1/1. Catalyzes the ferrous insertion into protoporphyrin IX. In Yersinia pestis bv. Antiqua (strain Antiqua), this protein is Ferrochelatase.